The following is a 432-amino-acid chain: GTPase HflX (432 aa).

Positions 202 to 367 (FTVALVGYTN…ELRRAVGRAM (166 aa)) constitute a Hflx-type G domain. Residues 208 to 215 (GYTNAGKS), 233 to 237 (FATLD), 255 to 258 (DTVG), 321 to 324 (NKID), and 345 to 347 (SAQ) contribute to the GTP site. Positions 215 and 235 each coordinate Mg(2+).

It belongs to the TRAFAC class OBG-HflX-like GTPase superfamily. HflX GTPase family. In terms of assembly, monomer. Associates with the 50S ribosomal subunit. Mg(2+) is required as a cofactor.

The protein resides in the cytoplasm. In terms of biological role, GTPase that associates with the 50S ribosomal subunit and may have a role during protein synthesis or ribosome biogenesis. In Magnetococcus marinus (strain ATCC BAA-1437 / JCM 17883 / MC-1), this protein is GTPase HflX.